Reading from the N-terminus, the 350-residue chain is Phosphoribosylformylglycinamidine cyclo-ligase (350 aa).

The protein belongs to the AIR synthase family.

The protein localises to the cytoplasm. It catalyses the reaction 2-formamido-N(1)-(5-O-phospho-beta-D-ribosyl)acetamidine + ATP = 5-amino-1-(5-phospho-beta-D-ribosyl)imidazole + ADP + phosphate + H(+). It functions in the pathway purine metabolism; IMP biosynthesis via de novo pathway; 5-amino-1-(5-phospho-D-ribosyl)imidazole from N(2)-formyl-N(1)-(5-phospho-D-ribosyl)glycinamide: step 2/2. The polypeptide is Phosphoribosylformylglycinamidine cyclo-ligase (Pseudoalteromonas translucida (strain TAC 125)).